The sequence spans 434 residues: Neuropeptide receptor 22 (434 aa).

The Extracellular portion of the chain corresponds to 1 to 55; the sequence is MDEGGGIGSSLLSRITTTASEIMMRNEPTTTENPAVQEMNHIYHLTPSMKMLCIL. Residues 56–76 form a helical membrane-spanning segment; it reads FYSILCVCCVYGNVLVILVIV. The Cytoplasmic segment spans residues 77–86; that stretch reads YFKRLRTATN. A helical membrane pass occupies residues 87–107; that stretch reads ILILNLAVADLLISVFCIPFS. At 108–128 the chain is on the extracellular side; sequence YWQVLIYDDQRWLFGSMMCSL. Cys-126 and Cys-204 are oxidised to a cystine. Residues 129–149 form a helical membrane-spanning segment; it reads LAFLQAMAVFLSAWTLVVISF. At 150–169 the chain is on the cytoplasmic side; it reads DRWMAIMFLLTPNIRITRRR. A helical membrane pass occupies residues 170 to 190; the sequence is ALYLVAATWIFSILMALPLLF. The Extracellular segment spans residues 191–226; sequence TTRFFEDQDGLPNCGENWTYFGDSGEQVRKVYSSMV. N-linked (GlcNAc...) asparagine glycosylation is present at Asn-207. A helical membrane pass occupies residues 227 to 247; that stretch reads LILQYVVPQAVLIITYTHIGI. Residues 248-277 are Cytoplasmic-facing; that stretch reads KMWNSRVPGMQNGATKKMIVDRHESVKKLV. A helical membrane pass occupies residues 278-298; sequence PMVILISALFALCWLPLLILI. Over 299-310 the chain is Extracellular; that stretch reads NVIPEFYPDINS. A helical transmembrane segment spans residues 311-331; the sequence is WGYILYLWWFAHGLAMSHSMV. Residues 332-434 lie on the Cytoplasmic side of the membrane; that stretch reads NPIIYFIRNA…VRNNSANSLA (103 aa).

It belongs to the G-protein coupled receptor 1 family. Expressed in many cells, mainly in the head region, with expression detected in the head muscles, I2 neurons, MC neurons, RIH neuron, AIA neurons, AUA neurons, ASK neurons, ASI neurons, a few B-type motorneurons in the posterior ventral nerve cord, pharyngeal muscles, body wall muscles, the intestine and a few classes of unidentified cells anterior to the nerve ring. Expression in the MC neurons is important to mediate suppression of feeding while expression in the RIH neuron is important for the facilitation of egg-laying. No expression detected in other tissues including hypodermis.

It localises to the cell membrane. Its function is as follows. Receptor for the LURY-1-1 and LURY-1-2 peptides which control food-related processes including feeding, lifespan, egg-laying and roaming behavior. Receptor for flp-7 which stimulates serotonin-induced fat loss. Serotonin induces secretion of flp-7 from neurons and binding to npr-22 which leads to induction of the atgp-1 lipase and subsequent fat loss. Acts in vitro as a receptor for the flp-7 FMRFamide-like neuropeptides TPMQRSSMVRF-amide, SPMQRSSMVRF-amide, SPMERSAMVRF-amide and SPMDRSKMVRF-amide. Also acts in vitro as a receptor for a number of other FMRFamide-like neuropeptides including the flp-1 neuropeptide PNFMRY-amide, the flp-9 neuropeptide KPSFVRF-amide, the flp-11 neuropeptides AMRNALVRF-amide, ASGGMRNALVRF-amide and NGAPQPFVRF-amide, the flp-13 neuropeptides AADGAPLIRF-amide, ASPSAPLIRF-amide, SPSAVPLIRF-amide, SAAAPLIRF-amide and ASSAPLIRF-amide, and the flp-22 neuropeptide SPSAKWMRF-amide. The SPMERSAMVRF-amide neuropeptide from flp-7 acts as the strongest in vitro activator of npr-22. This chain is Neuropeptide receptor 22, found in Caenorhabditis elegans.